The primary structure comprises 1429 residues: Probable ATP-dependent RNA helicase spindle-E (1429 aa).

Residues 121 to 288 (VNAINTHQVV…FSTKVSVPPV (168 aa)) form the Helicase ATP-binding domain. 134 to 141 (GETGCGKT) provides a ligand contact to ATP. Positions 234–237 (DEVH) match the DEAH box motif. The Helicase C-terminal domain maps to 349 to 521 (QSEQSYDDAK…NSVLKAKLLD (173 aa)). A Tudor domain is found at 933–996 (AGVLTKGMMV…RLMTKELLSQ (64 aa)).

The protein belongs to the DEAD box helicase family. DEAH subfamily.

Its subcellular location is the cytoplasm. The enzyme catalyses ATP + H2O = ADP + phosphate + H(+). Functionally, probable ATP-binding RNA helicase which plays a central role during spermatogenesis and oogenesis by repressing transposable elements and preventing their mobilization, which is essential for the germline integrity. Acts via the piRNA metabolic process, which mediates the repression of transposable elements during meiosis by forming complexes composed of piRNAs and Piwi and govern the methylation and subsequent repression of transposons. Involved in the repression of LTR retrotransposon copia. Also involved in telomere regulation by repressing specialized telomeric retroelements HeT-A, TAHRE, and TART; Drosophila telomeres being maintained by transposition of specialized telomeric retroelements. Involved in telomeric trans-silencing, a repression mechanism by which a transposon or a transgene inserted in subtelomeric heterochromatin has the capacity to repress in trans in the female germline, a homologous transposon, or transgene located in euchromatin. Involved in the repression of testis-expressed Stellate genes by the homologous Su(Ste) repeats. Required for anteroposterior and dorsoventral axis formation during oogenesis. The polypeptide is Probable ATP-dependent RNA helicase spindle-E (spn-E) (Drosophila ananassae (Fruit fly)).